A 148-amino-acid chain; its full sequence is Antigen GM6 (148 aa).

A disordered region spans residues 1 to 22 (KLKASDSRSFLDPMPEGVPLSE). Repeat copies occupy residues 1–68 (KLKA…HELA) and 69–136 (KLKA…HELA). Residues 137–148 (KLKASDSRSFQS) form a 3; truncated repeat.

The protein resides in the cytoplasm. It is found in the cytoskeleton. This chain is Antigen GM6 (GM6), found in Trypanosoma brucei gambiense.